Reading from the N-terminus, the 283-residue chain is Pantothenate synthetase (283 aa).

30–37 contributes to the ATP binding site; sequence MGNLHDGH. Histidine 37 serves as the catalytic Proton donor. Glutamine 61 contributes to the (R)-pantoate binding site. A beta-alanine-binding site is contributed by glutamine 61. 149–152 lines the ATP pocket; it reads GEKD. Glutamine 155 lines the (R)-pantoate pocket. Residues methionine 178 and 186–189 contribute to the ATP site; that span reads LSSR.

The protein belongs to the pantothenate synthetase family. As to quaternary structure, homodimer.

It localises to the cytoplasm. It catalyses the reaction (R)-pantoate + beta-alanine + ATP = (R)-pantothenate + AMP + diphosphate + H(+). It functions in the pathway cofactor biosynthesis; (R)-pantothenate biosynthesis; (R)-pantothenate from (R)-pantoate and beta-alanine: step 1/1. With respect to regulation, activation requires a combination of a divalent cation, magnesium or manganese, and a monovalent cation, potassium or ammonium. Above the optimum concentration for activation, magnesium and manganese are rather inhibitory. Also activated by 2-mercaptoethanol, dithiothreitol, cysteine and glutathione. Inhibited by divalent cations (mercury, cobalt, zinc, copper, silver), chelating agents (EDTA, EGTA and o-phenanthroline), and analogs of beta-alanine (taurine, gamma-aminobutyrate, gamma-amino-beta-hydroxybutyrate). Functionally, catalyzes the condensation of pantoate with beta-alanine in an ATP-dependent reaction via a pantoyl-adenylate intermediate. This chain is Pantothenate synthetase (panC), found in Escherichia coli (strain K12).